Consider the following 390-residue polypeptide: 1-deoxy-D-xylulose 5-phosphate reductoisomerase (390 aa).

Residues T18, G19, S20, I21, and N130 each coordinate NADPH. K131 serves as a coordination point for 1-deoxy-D-xylulose 5-phosphate. Residue E132 participates in NADPH binding. D156 is a Mn(2+) binding site. 1-deoxy-D-xylulose 5-phosphate contacts are provided by S157, E158, S182, and H205. Position 158 (E158) interacts with Mn(2+). G211 lines the NADPH pocket. Positions 218, 223, 224, and 227 each coordinate 1-deoxy-D-xylulose 5-phosphate. Position 227 (E227) interacts with Mn(2+).

Belongs to the DXR family. It depends on Mg(2+) as a cofactor. The cofactor is Mn(2+).

The catalysed reaction is 2-C-methyl-D-erythritol 4-phosphate + NADP(+) = 1-deoxy-D-xylulose 5-phosphate + NADPH + H(+). It functions in the pathway isoprenoid biosynthesis; isopentenyl diphosphate biosynthesis via DXP pathway; isopentenyl diphosphate from 1-deoxy-D-xylulose 5-phosphate: step 1/6. Its function is as follows. Catalyzes the NADPH-dependent rearrangement and reduction of 1-deoxy-D-xylulose-5-phosphate (DXP) to 2-C-methyl-D-erythritol 4-phosphate (MEP). The sequence is that of 1-deoxy-D-xylulose 5-phosphate reductoisomerase from Bacteroides thetaiotaomicron (strain ATCC 29148 / DSM 2079 / JCM 5827 / CCUG 10774 / NCTC 10582 / VPI-5482 / E50).